The primary structure comprises 175 residues: Nucleoside triphosphate/diphosphate phosphatase (175 aa).

Arg23 (proton donor) is an active-site residue. Positions 87, 103, 105, 107, 120, and 123 each coordinate Mg(2+).

The protein belongs to the Ntdp family. Mg(2+) is required as a cofactor.

The enzyme catalyses a ribonucleoside 5'-triphosphate + H2O = a ribonucleoside 5'-diphosphate + phosphate + H(+). The catalysed reaction is a ribonucleoside 5'-diphosphate + H2O = a ribonucleoside 5'-phosphate + phosphate + H(+). Its function is as follows. Has nucleoside phosphatase activity towards nucleoside triphosphates and nucleoside diphosphates. The sequence is that of Nucleoside triphosphate/diphosphate phosphatase from Oceanobacillus iheyensis (strain DSM 14371 / CIP 107618 / JCM 11309 / KCTC 3954 / HTE831).